We begin with the raw amino-acid sequence, 33 residues long: U1-pseudomyrmecitoxin-Pt1 subunit LS1 (33 aa).

It belongs to the myrmexin family. In terms of assembly, heterodimer composed of subunit LS1 and subunit SS1 (U1-PSDTX-Pt1b), heterodimer composed of subunit LS1 and SS2 (U1-PSDTX-Pt1b), and heterodimer composed of subunit LS1 and SS3; disulfide-linked. As to expression, expressed by the venom gland.

Its subcellular location is the secreted. Functionally, this heterodimer may have anti-inflammatory properties, since the myrmexin complex (composed of 6 SS-LS heterodimers) inhibits carrageenin-induced edema in a dose-dependent manner (after subcutaneous injection into rats). The protein is U1-pseudomyrmecitoxin-Pt1 subunit LS1 of Pseudomyrmex triplarinus (Ant).